The following is a 391-amino-acid chain: S-adenosylmethionine synthase (391 aa).

Histidine 14 is a binding site for ATP. Aspartate 16 serves as a coordination point for Mg(2+). Glutamate 42 contributes to the K(+) binding site. Residues glutamate 55 and glutamine 98 each coordinate L-methionine. The segment at 98–108 is flexible loop; the sequence is QSPDIAMGVDE. ATP-binding positions include 172-174, 238-239, aspartate 247, 253-254, alanine 270, and lysine 274; these read DGK, RF, and RK. Aspartate 247 is a binding site for L-methionine. Position 278 (lysine 278) interacts with L-methionine.

The protein belongs to the AdoMet synthase family. As to quaternary structure, homotetramer; dimer of dimers. Mg(2+) is required as a cofactor. Requires K(+) as cofactor.

Its subcellular location is the cytoplasm. The catalysed reaction is L-methionine + ATP + H2O = S-adenosyl-L-methionine + phosphate + diphosphate. The protein operates within amino-acid biosynthesis; S-adenosyl-L-methionine biosynthesis; S-adenosyl-L-methionine from L-methionine: step 1/1. Functionally, catalyzes the formation of S-adenosylmethionine (AdoMet) from methionine and ATP. The overall synthetic reaction is composed of two sequential steps, AdoMet formation and the subsequent tripolyphosphate hydrolysis which occurs prior to release of AdoMet from the enzyme. The protein is S-adenosylmethionine synthase of Clostridium tetani (strain Massachusetts / E88).